Consider the following 37-residue polypeptide: Large ribosomal subunit protein bL36 (37 aa).

The protein belongs to the bacterial ribosomal protein bL36 family.

This is Large ribosomal subunit protein bL36 from Thermus thermophilus (strain ATCC BAA-163 / DSM 7039 / HB27).